Reading from the N-terminus, the 517-residue chain is GMP synthase [glutamine-hydrolyzing] (517 aa).

One can recognise a Glutamine amidotransferase type-1 domain in the interval 9 to 199; the sequence is RILILDFGSQ…VLNVCGCEGL (191 aa). Residue Cys-86 is the Nucleophile of the active site. Residues His-173 and Glu-175 contribute to the active site. The region spanning 200 to 392 is the GMPS ATP-PPase domain; sequence WTSASIIEDA…LGLPYNMLYR (193 aa). 227 to 233 lines the ATP pocket; it reads SGGVDSS.

In terms of assembly, homodimer.

It carries out the reaction XMP + L-glutamine + ATP + H2O = GMP + L-glutamate + AMP + diphosphate + 2 H(+). Its pathway is purine metabolism; GMP biosynthesis; GMP from XMP (L-Gln route): step 1/1. Functionally, catalyzes the synthesis of GMP from XMP. The polypeptide is GMP synthase [glutamine-hydrolyzing] (Aliivibrio salmonicida (strain LFI1238) (Vibrio salmonicida (strain LFI1238))).